Consider the following 257-residue polypeptide: ATP synthase subunit a (257 aa).

A propeptide spans 1–8 (MRHLDFVL) (removed in mature form). The next 7 helical transmembrane spans lie at 34 to 54 (LTNI…YSLL), 93 to 113 (FFPL…IGLV), 122 to 142 (HFIL…ILGF), 149 to 169 (FFSL…LVLI), 187 to 207 (ANIL…YNIM), 210 to 230 (GIIF…FSGL), and 231 to 251 (ELAI…SYIK).

Belongs to the ATPase A chain family. As to quaternary structure, F-type ATPases have 2 components, CF(1) - the catalytic core - and CF(0) - the membrane proton channel. CF(1) has five subunits: alpha(3), beta(3), gamma(1), delta(1), epsilon(1). CF(0) has three main subunits: a, b and c.

The protein localises to the mitochondrion inner membrane. Its function is as follows. Mitochondrial membrane ATP synthase (F(1)F(0) ATP synthase or Complex V) produces ATP from ADP in the presence of a proton gradient across the membrane which is generated by electron transport complexes of the respiratory chain. F-type ATPases consist of two structural domains, F(1) - containing the extramembraneous catalytic core and F(0) - containing the membrane proton channel, linked together by a central stalk and a peripheral stalk. During catalysis, ATP synthesis in the catalytic domain of F(1) is coupled via a rotary mechanism of the central stalk subunits to proton translocation. Key component of the proton channel; it may play a direct role in the translocation of protons across the membrane. The sequence is that of ATP synthase subunit a (atp6) from Penicillium chrysogenum (Penicillium notatum).